We begin with the raw amino-acid sequence, 275 residues long: NH(3)-dependent NAD(+) synthetase (275 aa).

50 to 57 (GISGGVDS) is an ATP binding site. D56 contributes to the Mg(2+) binding site. Residue R147 coordinates deamido-NAD(+). T167 serves as a coordination point for ATP. E172 provides a ligand contact to Mg(2+). Residues K180 and D187 each coordinate deamido-NAD(+). The ATP site is built by K196 and T218. Residue 267 to 268 (HK) coordinates deamido-NAD(+).

The protein belongs to the NAD synthetase family. As to quaternary structure, homodimer.

The enzyme catalyses deamido-NAD(+) + NH4(+) + ATP = AMP + diphosphate + NAD(+) + H(+). Its pathway is cofactor biosynthesis; NAD(+) biosynthesis; NAD(+) from deamido-NAD(+) (ammonia route): step 1/1. Functionally, catalyzes the ATP-dependent amidation of deamido-NAD to form NAD. Uses ammonia as a nitrogen source. This is NH(3)-dependent NAD(+) synthetase from Pseudomonas putida (strain ATCC 700007 / DSM 6899 / JCM 31910 / BCRC 17059 / LMG 24140 / F1).